Consider the following 604-residue polypeptide: Protein TAX4 (604 aa).

Disordered stretches follow at residues 38-77 (HPNG…PRSI), 133-249 (FSNR…RQQE), 267-300 (GTLP…QENL), 338-380 (DETF…KGLK), and 394-428 (PFPH…NEDK). Residues 176-185 (YDNNVRSRSI) are compositionally biased toward polar residues. Composition is skewed to low complexity over residues 186-203 (SPQV…SISS) and 224-240 (SMSS…KASL). Basic residues-rich tracts occupy residues 276–290 (SQRK…HKLL), 366–379 (KKKK…KKGL), and 396–421 (PHHH…HTSS). Residues 469-559 (ANEDDESHLQ…RVWNSVDGYV (91 aa)) enclose the EH domain.

The protein belongs to the IRS4 family. Interacts with INP51.

Functionally, with IRS4, acts as a positive regulator of INP51 activity and phosphatidylinositol 4,5-bisphosphate turnover. Negatively regulates signaling through the cell integrity pathway, including the MAP kinase SLT2. This is Protein TAX4 (TAX4) from Saccharomyces cerevisiae (strain YJM789) (Baker's yeast).